Here is a 220-residue protein sequence, read N- to C-terminus: Cytidylate kinase (220 aa).

11 to 19 contacts ATP; that stretch reads GPTASGKGT.

This sequence belongs to the cytidylate kinase family. Type 1 subfamily.

Its subcellular location is the cytoplasm. The catalysed reaction is CMP + ATP = CDP + ADP. It carries out the reaction dCMP + ATP = dCDP + ADP. This chain is Cytidylate kinase, found in Polynucleobacter asymbioticus (strain DSM 18221 / CIP 109841 / QLW-P1DMWA-1) (Polynucleobacter necessarius subsp. asymbioticus).